The chain runs to 177 residues: Probasin (177 aa).

The signal sequence occupies residues 1 to 17 (MRVILLLLTLDVLGVSS). Cys79 and Cys170 are oxidised to a cystine.

The protein belongs to the calycin superfamily. Lipocalin family. In terms of tissue distribution, prostatic epithelial cells.

It localises to the nucleus. The protein resides in the secreted. The polypeptide is Probasin (Pbsn) (Rattus norvegicus (Rat)).